The chain runs to 166 residues: Lipoprotein signal peptidase (166 aa).

The next 4 helical transmembrane spans lie at 9–29 (ASGA…FDQL), 45–65 (ALTS…FGFL), 71–91 (WQRW…CFLL), and 100–120 (FSLS…DRLV). Catalysis depends on residues Asp126 and Asp144. The chain crosses the membrane as a helical span at residues 135–155 (WHFPAFNLADSAITIGAVLLV).

This sequence belongs to the peptidase A8 family.

The protein resides in the cell inner membrane. The enzyme catalyses Release of signal peptides from bacterial membrane prolipoproteins. Hydrolyzes -Xaa-Yaa-Zaa-|-(S,diacylglyceryl)Cys-, in which Xaa is hydrophobic (preferably Leu), and Yaa (Ala or Ser) and Zaa (Gly or Ala) have small, neutral side chains.. It participates in protein modification; lipoprotein biosynthesis (signal peptide cleavage). In terms of biological role, this protein specifically catalyzes the removal of signal peptides from prolipoproteins. This chain is Lipoprotein signal peptidase, found in Burkholderia ambifaria (strain ATCC BAA-244 / DSM 16087 / CCUG 44356 / LMG 19182 / AMMD) (Burkholderia cepacia (strain AMMD)).